The primary structure comprises 152 residues: Protein Smg homolog (152 aa).

Belongs to the Smg family.

This is Protein Smg homolog from Nitrosomonas eutropha (strain DSM 101675 / C91 / Nm57).